We begin with the raw amino-acid sequence, 237 residues long: Small ribosomal subunit protein uS5 (237 aa).

The interval 1–59 (MADETNLEGVAAVEATGGEPQREGRGRGRGRGGNDRGGERGGRGRRDDRRGRGNNDEEG) is disordered. A compositionally biased stretch (basic and acidic residues) spans 20–55 (PQREGRGRGRGRGGNDRGGERGGRGRRDDRRGRGNN). The region spanning 63–126 (LIEKLVHINR…AAAKRAMVRV (64 aa)) is the S5 DRBM domain.

This sequence belongs to the universal ribosomal protein uS5 family. In terms of assembly, part of the 30S ribosomal subunit. Contacts proteins S4 and S8.

In terms of biological role, with S4 and S12 plays an important role in translational accuracy. Its function is as follows. Located at the back of the 30S subunit body where it stabilizes the conformation of the head with respect to the body. This is Small ribosomal subunit protein uS5 from Novosphingobium aromaticivorans (strain ATCC 700278 / DSM 12444 / CCUG 56034 / CIP 105152 / NBRC 16084 / F199).